The primary structure comprises 337 residues: Meiotic driver wtf4 (337 aa).

Residues 1–29 (MKNKDYPLRSSMDELSTKNDNEIDLEKGP) show a composition bias toward basic and acidic residues. The tract at residues 1 to 40 (MKNKDYPLRSSMDELSTKNDNEIDLEKGPLPEYNSEDEST) is disordered. Helical transmembrane passes span 89-109 (LLIS…CVNP), 119-139 (AFFV…FCFF), 149-169 (CIKV…VGLY), 176-196 (VVII…RSKF), 210-230 (CSIS…FWTL), and 234-254 (FSGL…TKGL).

It belongs to the WTF family. In terms of assembly, homomer. Forms protein aggregates. The two isoforms can interact with each other and with themselves. High sequence similarity is required for their interaction.

The protein resides in the spore membrane. Its subcellular location is the vacuole membrane. The protein localises to the ascus epiplasm. It localises to the cytoplasm. It is found in the endoplasmic reticulum membrane. Its function is as follows. Promotes unequal transmission of alleles from the parental zygote to progeny spores by acting as poison/antidote system where the poison and antidote proteins are produced from the same locus; the poison component is trans-acting and targets all spores within an ascus whereas the antidote component is spore-specific, leading to poisoning of all progeny that do not inherit the allele. Functionally, localizes isoform 2 to the vacuole thereby facilitating its degradation. Forms toxic aggregates that disrupt spore maturation. This chain is Meiotic driver wtf4, found in Schizosaccharomyces kambucha (Fission yeast).